The sequence spans 273 residues: Endochitinase EP3 (273 aa).

A signal peptide spans 1–28 (MLTPTISKSISLVTILLVLQAFSNTTKA). N-linked (GlcNAc...) asparagine glycosylation is present at Asn-24. In terms of domain architecture, Chitin-binding type-1 spans 29–63 (QNCGCSSELCCSQFGFCGNTSDYCGVGCQQGPCFA). Disulfide bonds link Cys-31–Cys-39, Cys-33–Cys-45, Cys-38–Cys-52, and Cys-56–Cys-61. Asn-47 is a glycosylation site (N-linked (GlcNAc...) asparagine). The interval 70 to 273 (VSVAEIVTQE…GVDPGNNLTC (204 aa)) is catalytic. The active-site Proton donor is the Glu-136. N-linked (GlcNAc...) asparagine glycosylation is found at Asn-157 and Asn-270.

This sequence belongs to the glycosyl hydrolase 19 family. Chitinase class I subfamily. In terms of tissue distribution, expressed in cells surrounding embryos, stems, seedlings, pollen, roots, shoots, inflorescence, flowers, siliques and leaves. Present in seedpods and seed embryos, but not in roots, inflorescence stems, leaves and flowers.

It catalyses the reaction Random endo-hydrolysis of N-acetyl-beta-D-glucosaminide (1-&gt;4)-beta-linkages in chitin and chitodextrins.. Probably involved in hypersensitive reaction upon Xanthomonas campestris infection. The chain is Endochitinase EP3 from Arabidopsis thaliana (Mouse-ear cress).